The primary structure comprises 345 residues: Protein GAMETE CELL DEFECTIVE 1, mitochondrial (345 aa).

Residues 1 to 43 constitute a mitochondrion transit peptide; it reads MLALRKTLLHGRLPAAPPAAAAAAIASRIPALLRRLSSSPGDG. The interval 36 to 81 is disordered; that stretch reads LSSSPGDGQGGDEWGSSWSTGITKEHFDGSDAAVGRPVTSPSKPVS.

As to expression, expressed in roots, stems, leaves and florets.

The protein resides in the mitochondrion. Essential for fertility (male and female gametophyte functions and development). Required for the integrity of female gametic mitochondria. Involved in embryo apical-basal patterning, and particularly dorsal-ventral patterning, during early embryogenesis, and endosperm free nucleus positioning and development as well as early endosperm development, probably by modulating the expression pattern of related genes (e.g. AL1, MYB3/AL2, CYP78A13/GE, PNH1, HAZ1, MPK6 and OSH1). Has function in triggering of endosperm programmed cell death (PCD) leading to syncytial endosperm cellularization and starchy endosperm cell maturation. Implicated in central vacuole dynamics necessary for microspore development leading to pollen production, and for pollen development and germination. The polypeptide is Protein GAMETE CELL DEFECTIVE 1, mitochondrial (Oryza sativa subsp. japonica (Rice)).